A 670-amino-acid polypeptide reads, in one-letter code: Probable Na(+)/H(+) antiporter nhx-3 (670 aa).

8 consecutive transmembrane segments (helical) span residues 41 to 61, 73 to 93, 97 to 117, 129 to 149, 164 to 184, 192 to 212, 235 to 255, and 268 to 288; these read VYVITTWLLVASLAKILFNLM, LLIIVGLGLGYFLNQTTLSGV, SHAFFLYLLPPIIFDAGYFMP, LVFSVLGTLWNTFAIGGSLLI, EILVFSALISAVDPVAVIAIF, FLFINVFGEALFNDGVTVVLY, GLSFFVVALGGAAIGIIFAIA, and ILAPVFIFLLPYMAYLTAEMV. Asn-310 carries an N-linked (GlcNAc...) asparagine glycan. 4 helical membrane-spanning segments follow: residues 325-345, 351-371, 390-410, and 418-438; these read MLAQCSETVIFMFLGLSTLTS, FIFIGATLVFCLIYRAIGIIV, FILSYGGLRGAIAYGLVVSIP, and MFITTTICVIYFTVFLQGITI. The tract at residues 648 to 670 is disordered; that stretch reads GDLKGHCGTSRKPKHSMFELRHV.

It belongs to the monovalent cation:proton antiporter 1 (CPA1) transporter (TC 2.A.36) family. Post-translationally, phosphorylated. Expressed in hypodermal cells of the main body syncytium, ut1 cells of the vulva and the spermathecal junction cell.

The protein localises to the endomembrane system. Functionally, plays a role in epithelial membrane transport processes. The polypeptide is Probable Na(+)/H(+) antiporter nhx-3 (nhx-3) (Caenorhabditis elegans).